The primary structure comprises 411 residues: UPF0597 protein Fnod_1278 (411 aa).

It belongs to the UPF0597 family.

This chain is UPF0597 protein Fnod_1278, found in Fervidobacterium nodosum (strain ATCC 35602 / DSM 5306 / Rt17-B1).